The sequence spans 169 residues: Cyclic pyranopterin monophosphate synthase (169 aa).

Substrate is bound by residues 83–85 (LCH) and 121–122 (ME). Residue Asp136 is part of the active site.

It belongs to the MoaC family. Homohexamer; trimer of dimers.

It catalyses the reaction (8S)-3',8-cyclo-7,8-dihydroguanosine 5'-triphosphate = cyclic pyranopterin phosphate + diphosphate. It functions in the pathway cofactor biosynthesis; molybdopterin biosynthesis. Its function is as follows. Catalyzes the conversion of (8S)-3',8-cyclo-7,8-dihydroguanosine 5'-triphosphate to cyclic pyranopterin monophosphate (cPMP). This Rhodospirillum centenum (strain ATCC 51521 / SW) protein is Cyclic pyranopterin monophosphate synthase.